A 223-amino-acid polypeptide reads, in one-letter code: Kynurenine formamidase (223 aa).

Phe-34 lines the substrate pocket. Residues His-64, His-68, and Asp-70 each coordinate Zn(2+). His-74 functions as the Proton donor/acceptor in the catalytic mechanism. Zn(2+) is bound by residues His-174 and Glu-186.

This sequence belongs to the Cyclase 1 superfamily. KynB family. Homodimer. It depends on Zn(2+) as a cofactor.

The enzyme catalyses N-formyl-L-kynurenine + H2O = L-kynurenine + formate + H(+). It functions in the pathway amino-acid degradation; L-tryptophan degradation via kynurenine pathway; L-kynurenine from L-tryptophan: step 2/2. Its function is as follows. Catalyzes the hydrolysis of N-formyl-L-kynurenine to L-kynurenine, the second step in the kynurenine pathway of tryptophan degradation. This Polaromonas naphthalenivorans (strain CJ2) protein is Kynurenine formamidase.